The sequence spans 270 residues: Acyl-[acyl-carrier-protein]--UDP-N-acetylglucosamine O-acyltransferase (270 aa).

Belongs to the transferase hexapeptide repeat family. LpxA subfamily. Homotrimer.

The protein resides in the cytoplasm. It catalyses the reaction a (3R)-hydroxyacyl-[ACP] + UDP-N-acetyl-alpha-D-glucosamine = a UDP-3-O-[(3R)-3-hydroxyacyl]-N-acetyl-alpha-D-glucosamine + holo-[ACP]. Its pathway is glycolipid biosynthesis; lipid IV(A) biosynthesis; lipid IV(A) from (3R)-3-hydroxytetradecanoyl-[acyl-carrier-protein] and UDP-N-acetyl-alpha-D-glucosamine: step 1/6. Involved in the biosynthesis of lipid A, a phosphorylated glycolipid that anchors the lipopolysaccharide to the outer membrane of the cell. This is Acyl-[acyl-carrier-protein]--UDP-N-acetylglucosamine O-acyltransferase from Helicobacter pylori (strain J99 / ATCC 700824) (Campylobacter pylori J99).